The following is a 241-amino-acid chain: Probable septum site-determining protein MinC (241 aa).

This sequence belongs to the MinC family. Interacts with MinD and FtsZ.

Its function is as follows. Cell division inhibitor that blocks the formation of polar Z ring septums. Rapidly oscillates between the poles of the cell to destabilize FtsZ filaments that have formed before they mature into polar Z rings. Prevents FtsZ polymerization. This Rhizobium rhizogenes (strain K84 / ATCC BAA-868) (Agrobacterium radiobacter) protein is Probable septum site-determining protein MinC.